The following is a 467-amino-acid chain: Ammonium transporter Rh type C (467 aa).

The Cytoplasmic segment spans residues 1 to 9 (MAWNTNLRW). Residues 10-30 (RLPLLCLVLEVAMVVLFGLFV) form a helical membrane-spanning segment. The Extracellular portion of the chain corresponds to 31–61 (RYSPDADSSWSNEKRKGNITSDLENEFYYRY). N-linked (GlcNAc...) asparagine glycosylation is present at Asn48. The helical transmembrane segment at 62–82 (PSFQDVHVMVFLGFGFLMTFL) threads the bilayer. At 83 to 86 (QRYG) the chain is on the cytoplasmic side. Residues 87-107 (YCALGFNFLLAALGVQWALLM) form a helical membrane-spanning segment. Residues 108–131 (QGWFQYTKDRLILLGIKNLIDADS) are Extracellular-facing. The next 2 helical transmembrane spans lie at 132–152 (CVASVCVAFGAVLGKVSPVQM) and 153–173 (LLMTFFQVALFSANEFLLLHV). At 174–179 (LEVKDA) the chain is on the extracellular side. A helical membrane pass occupies residues 180 to 200 (GGSITIHIFGAYFGLTVTWIL). At 201–219 (YRHNLDHSRERQSSVYHSN) the chain is on the cytoplasmic side. The helical transmembrane segment at 220–240 (LFAMIGTLFLWIYWPSFNSAM) threads the bilayer. At 241 to 251 (SNYGDAQHRAA) the chain is on the extracellular side. The chain crosses the membrane as a helical span at residues 252-272 (INTYCSLAASVLTSVAMSSVL). Residues 273-282 (HKKGKLDMVH) are Cytoplasmic-facing. Residues 283–303 (IQNATLAGGVGVGTAAEMMLM) form a helical membrane-spanning segment. Position 304 (Pro304) is a topological domain, extracellular. A helical transmembrane segment spans residues 305–325 (YGALIVGFICGAVSTLGFVYL). Topologically, residues 326–343 (TPFLESRLRIQDTCGIHN) are cytoplasmic. A helical membrane pass occupies residues 344–364 (LHGIPGLIGAIVGAVTAAYAS). Residues 365-391 (PDGDRGFVYPFGFHNEKDEKVQGRFQA) lie on the Extracellular side of the membrane. A helical membrane pass occupies residues 392–412 (FGLLLTLAIAMVGGTIMGLIL). Topologically, residues 413 to 467 (KLPFWGQAMDEDCFDDSIYWEMHEEKSSSPEDHTHKPSVPTEPVEQPTSSATLAP) are cytoplasmic. The segment covering 436-447 (EEKSSSPEDHTH) has biased composition (basic and acidic residues). The tract at residues 436 to 467 (EEKSSSPEDHTHKPSVPTEPVEQPTSSATLAP) is disordered. Positions 458–467 (QPTSSATLAP) are enriched in polar residues.

The protein belongs to the ammonium transporter (TC 2.A.49) family. Rh subfamily. As to quaternary structure, homotrimer. N-glycosylated.

The protein localises to the cell membrane. It localises to the apical cell membrane. It carries out the reaction NH4(+)(in) = NH4(+)(out). The enzyme catalyses methylamine(out) = methylamine(in). It catalyses the reaction CO2(out) = CO2(in). Its function is as follows. Ammonium transporter involved in the maintenance of acid-base homeostasis. Transports ammonium and its related derivative methylammonium across the plasma membrane of epithelial cells likely contributing to renal transepithelial ammonia transport and ammonia metabolism. Postulated to primarily mediate an electroneutral bidirectional transport of NH3 ammonia species according to a mechanism that implies interaction of an NH4(+) ion with acidic residues of the pore entry followed by dissociation of NH4(+) into NH3 and H(+). As a result NH3 transits through the central pore and is protonated on the extracellular side reforming NH4(+). May act as a CO2 channel providing for renal acid secretion. The protein is Ammonium transporter Rh type C (RHCG) of Oryctolagus cuniculus (Rabbit).